The chain runs to 75 residues: Alpha-elapitoxin-Bc2b (75 aa).

An N-terminal signal peptide occupies residues 1–2 (YT). Intrachain disulfides connect cysteine 5/cysteine 24, cysteine 17/cysteine 45, cysteine 30/cysteine 34, cysteine 49/cysteine 60, and cysteine 61/cysteine 66.

As to quaternary structure, monomer in solution, homodimer in crystal state. Expressed by the venom gland.

It localises to the secreted. Functionally, binds to muscular and neuronal nicotinic acetylcholine receptor (nAChR) and inhibits acetylcholine from binding to the receptor, thereby impairing neuromuscular and neuronal transmission. Blocks muscle type nAChR. Also binds with high affinity to alpha-7/CHRNA7 nAChRs. In addition, shows a weak inhibition of neuronal alpha-3-beta-2/CHRNA3-CHRNB2 nAChR. Selectively binds to alpha-1-delta subunit interface of the mouse muscle nicotinic acetylcholine receptor, with a 10-fold higher affinity for the adult than for the fetal receptors. In vivo, when intraperitoneally injected into mice, causes flaccid paralysis and respiratory distress, followed by death within 2-4 hours. This Bungarus candidus (Malayan krait) protein is Alpha-elapitoxin-Bc2b.